A 485-amino-acid polypeptide reads, in one-letter code: Rop guanine nucleotide exchange factor 2 (485 aa).

Residues 1–36 are disordered; that stretch reads MENLPNHEENDDVGYHQSPGPIDPNDHSASETPVYS. The PRONE domain maps to 107-485; sequence LAVQEISEPE…YVDKTMRGEE (379 aa).

Interacts with ARC10/ROP11. As to expression, expressed in the vascular tissues of roots, leaves, sepals, petals and siliques.

Guanine-nucleotide exchange factor (GEF) that acts as an activator of Rop (Rho of plants) GTPases by promoting the exchange of GDP for GTP. This Arabidopsis thaliana (Mouse-ear cress) protein is Rop guanine nucleotide exchange factor 2 (ROPGEF2).